The primary structure comprises 257 residues: Zinc transporter ZupT (257 aa).

5 helical membrane-spanning segments follow: residues leucine 5–glycine 25, valine 32–methionine 52, glycine 61–leucine 81, alanine 109–valine 129, and leucine 137–alanine 157. Asparagine 120 and glutamate 123 together coordinate Fe(2+). Positions 123 and 148 each coordinate Zn(2+). 3 residues coordinate Fe(2+): asparagine 149, glutamate 152, and glutamate 181. Glutamate 152 contacts Zn(2+). Helical transmembrane passes span isoleucine 182–alanine 202, alanine 203–leucine 223, and glycine 236–isoleucine 256.

This sequence belongs to the ZIP transporter (TC 2.A.5) family. ZupT subfamily.

It localises to the cell inner membrane. The enzyme catalyses Zn(2+)(in) = Zn(2+)(out). Its function is as follows. Mediates zinc uptake. May also transport other divalent cations. This chain is Zinc transporter ZupT, found in Escherichia fergusonii (strain ATCC 35469 / DSM 13698 / CCUG 18766 / IAM 14443 / JCM 21226 / LMG 7866 / NBRC 102419 / NCTC 12128 / CDC 0568-73).